Reading from the N-terminus, the 456-residue chain is tRNA-2-methylthio-N(6)-dimethylallyladenosine synthase (456 aa).

Residues 18-136 form the MTTase N-terminal domain; sequence EFFFIQTFGC…FPEYLHRVQV (119 aa). [4Fe-4S] cluster contacts are provided by cysteine 27, cysteine 63, cysteine 97, cysteine 173, cysteine 177, and cysteine 180. Residues 159 to 391 enclose the Radical SAM core domain; the sequence is RKSNVKAFVT…AVNEGIVVGN (233 aa). The 64-residue stretch at 392–455 folds into the TRAM domain; the sequence is KAAEGKIYEV…SFSLVGEVVE (64 aa).

The protein belongs to the methylthiotransferase family. MiaB subfamily. As to quaternary structure, monomer. It depends on [4Fe-4S] cluster as a cofactor.

Its subcellular location is the cytoplasm. It catalyses the reaction N(6)-dimethylallyladenosine(37) in tRNA + (sulfur carrier)-SH + AH2 + 2 S-adenosyl-L-methionine = 2-methylsulfanyl-N(6)-dimethylallyladenosine(37) in tRNA + (sulfur carrier)-H + 5'-deoxyadenosine + L-methionine + A + S-adenosyl-L-homocysteine + 2 H(+). In terms of biological role, catalyzes the methylthiolation of N6-(dimethylallyl)adenosine (i(6)A), leading to the formation of 2-methylthio-N6-(dimethylallyl)adenosine (ms(2)i(6)A) at position 37 in tRNAs that read codons beginning with uridine. This Clostridium botulinum (strain Alaska E43 / Type E3) protein is tRNA-2-methylthio-N(6)-dimethylallyladenosine synthase.